The following is a 423-amino-acid chain: COP9 signalosome complex subunit 3 (423 aa).

In terms of domain architecture, PCI spans 197–365 (NFERALYFFE…GMVCFHDNPE (169 aa)). The interval 402 to 423 (QFVQKSMGTQEDDVGSKTSSYS) is disordered.

This sequence belongs to the CSN3 family. In terms of assembly, component of the CSN complex, probably composed of cops1, cops2, cops3, cops4, cops5, cops6, cops7, cops8 and cops9.

It localises to the cytoplasm. It is found in the nucleus. Functionally, component of the COP9 signalosome complex (CSN), a complex involved in various cellular and developmental processes. The CSN complex is an essential regulator of the ubiquitin (Ubl) conjugation pathway by mediating the deneddylation of the cullin subunits of E3 ligase complexes, leading to modify the Ubl ligase activity. This chain is COP9 signalosome complex subunit 3 (cops3), found in Danio rerio (Zebrafish).